We begin with the raw amino-acid sequence, 313 residues long: Protein-methionine-sulfoxide reductase catalytic subunit MsrP (313 aa).

A signal peptide (tat-type signal) is located at residues 1–44; the sequence is MARWRPDTAEREATPEALYLRRREFLALGAAGAVGLLLPRGARA. Mo-molybdopterin is bound by residues Asn76, 79–80, Cys134, Thr169, Asn217, Arg222, and 233–235; these read YE and GAK.

It belongs to the MsrP family. Heterodimer of a catalytic subunit (MsrP) and a heme-binding subunit (MsrQ). It depends on Mo-molybdopterin as a cofactor. Post-translationally, predicted to be exported by the Tat system. The position of the signal peptide cleavage has not been experimentally proven.

The protein localises to the periplasm. It catalyses the reaction L-methionyl-[protein] + a quinone + H2O = L-methionyl-(S)-S-oxide-[protein] + a quinol. It carries out the reaction L-methionyl-[protein] + a quinone + H2O = L-methionyl-(R)-S-oxide-[protein] + a quinol. Part of the MsrPQ system that repairs oxidized periplasmic proteins containing methionine sulfoxide residues (Met-O), using respiratory chain electrons. Thus protects these proteins from oxidative-stress damage caused by reactive species of oxygen and chlorine generated by the host defense mechanisms. MsrPQ is essential for the maintenance of envelope integrity under bleach stress, rescuing a wide series of structurally unrelated periplasmic proteins from methionine oxidation. The catalytic subunit MsrP is non-stereospecific, being able to reduce both (R-) and (S-) diastereoisomers of methionine sulfoxide. The polypeptide is Protein-methionine-sulfoxide reductase catalytic subunit MsrP (Anaeromyxobacter dehalogenans (strain 2CP-C)).